A 66-amino-acid polypeptide reads, in one-letter code: Omega conotoxin-CVIE (66 aa).

A signal peptide spans 1-17 (VVIVAVLLLTACQLITA). The propeptide occupies 18 to 40 (NDSRGTQKHRALRSDTKLSMSTR). Intrachain disulfides connect Cys41–Cys56, Cys48–Cys60, and Cys55–Cys65. The residue at position 65 (Cys65) is a Cysteine amide.

The protein belongs to the conotoxin O1 superfamily. In terms of tissue distribution, expressed by the venom duct.

It is found in the secreted. Its function is as follows. Omega-conotoxins act at presynaptic membranes, they bind and block voltage-gated calcium channels. This toxin blocks N-type calcium channels (Cav2.2/CACNA1B). It shows a higher potency when Cav2.2/CACNA1B is only expressed with the ancillary subunit CACNB3 (IC(50)=0.12 nM) than on Cav2.2/CACNA1B expressed with the ancillary subunits CACNA2D1 and CACNB3 (IC(50)=2.6 nM). The Cav2.2/CACNA1B block by this toxin is voltage-independent, whereas the recovery from toxin block is voltage-dependent. There is a low recovery at physiological membrane potential and a high recovery with hyperpolarized potential. This indicates that the toxin has a higher affinity for Cav2.2/CACNA1B in the inactivated state. It is noteworthy that ancillary subunits beta modulate recovery from this toxin block. Cav2.2/CACNA1B expressed with the ancillary subunit CACNB2a (isoform 2a) almost recover completely from this toxin block, whereas Cav2.2/CACNA1B expressed with CACNB3 exhibits relatively weak recovery. Inhibition by this toxin of excitatory synaptic transmission is reversible. In vivo, when tested on rat model of persistent pain, this toxin blocks chronic pain behavior. This Conus catus (Cat cone) protein is Omega conotoxin-CVIE.